The chain runs to 504 residues: Ent-kaurene oxidase-like 3 (504 aa).

Residues 3–23 (SLLAAGAGGIGVAAAAVGGFI) traverse the membrane as a helical segment. Cys448 contributes to the heme binding site.

This sequence belongs to the cytochrome P450 family. Requires heme as cofactor. As to expression, expressed in leaf blades.

It is found in the membrane. Functionally, may hydroxylate diterpenes. This Oryza sativa subsp. japonica (Rice) protein is Ent-kaurene oxidase-like 3.